The following is a 493-amino-acid chain: 3-ketoacyl-CoA synthase 16 (493 aa).

A signal peptide spans 1 to 35; sequence MDYPMKKVKIFFNYLMAHRFKLCFLPLMVAIAVEA. Residues 52-74 traverse the membrane as a helical segment; it reads NNHTSLTMFFLYLALGSTLYLMT. An FAE domain is found at 71–366; the sequence is YLMTRPKPVY…FFVRFVKKKF (296 aa). Active-site residues include cysteine 221, histidine 300, histidine 384, histidine 388, histidine 417, and asparagine 421.

It belongs to the thiolase-like superfamily. Chalcone/stilbene synthases family. In terms of tissue distribution, expressed in siliques.

It is found in the membrane. The enzyme catalyses a very-long-chain acyl-CoA + malonyl-CoA + H(+) = a very-long-chain 3-oxoacyl-CoA + CO2 + CoA. It functions in the pathway lipid metabolism; fatty acid biosynthesis. The chain is 3-ketoacyl-CoA synthase 16 from Arabidopsis thaliana (Mouse-ear cress).